Reading from the N-terminus, the 1371-residue chain is Perilipin-4 (1371 aa).

The segment covering 1 to 13 has biased composition (basic and acidic residues); the sequence is MSAPDEGRRDPPK. The disordered stretch occupies residues 1–22; the sequence is MSAPDEGRRDPPKPKGKTLGSF. Phosphoserine is present on residues serine 25 and serine 31. The interval 37-86 is disordered; that stretch reads ANAHSSARARPAADPTGAPAAEAAQPQAQVAAHPEQTAPWTEKELQPSEK. A compositionally biased stretch (low complexity) spans 44-72; that stretch reads RARPAADPTGAPAAEAAQPQAQVAAHPEQ. Repeat copies occupy residues 109–141, 142–174, 175–207, 208–240, 241–273, 274–306, 307–339, 340–372, 373–405, 406–438, 439–471, 472–504, 505–537, 538–570, 571–603, 604–636, 637–669, 670–702, 703–735, 736–768, 769–801, 802–834, 835–867, 868–900, 901–933, 934–966, and 967–999. The segment at 109-999 is 27 X 33 AA approximate tandem repeat; sequence GVASVVDVAK…LMGTKDTVFS (891 aa). Polar residues predominate over residues 1060 to 1083; it reads PATSWGGLTSSRTTDNGGEQTALS. Disordered regions lie at residues 1060-1093 and 1240-1260; these read PATS…SGIS and QAPE…EDAA.

This sequence belongs to the perilipin family.

It is found in the cell membrane. Its subcellular location is the cytoplasm. It localises to the lipid droplet. May play a role in triacylglycerol packaging into adipocytes. May function as a coat protein involved in the biogenesis of lipid droplets. This chain is Perilipin-4, found in Homo sapiens (Human).